The following is a 358-amino-acid chain: Ethanol acetyltransferase 1 (358 aa).

An AB hydrolase-1 domain is found at 59–166 (PIVFIHGLFG…NAPINQPHIS (108 aa)). Catalysis depends on charge relay system residues Ser132, Asp156, and His305.

The protein belongs to the AB hydrolase superfamily.

It localises to the mitochondrion. The enzyme catalyses ethanol + acetyl-CoA = ethyl acetate + CoA. It catalyses the reaction acetyl-CoA + H2O = acetate + CoA + H(+). The catalysed reaction is ethyl acetate + H2O = ethanol + acetate + H(+). Its function is as follows. Alcohol acetyltransferase that catalyzes the synthesis of ethyl acetate from ethanol and acetyl-CoA. Can also function as a thioesterase by hydrolyzing acetyl-CoA in the absence of ethanol, as well as esterase hydrolyzing ethyl acetate. The polypeptide is Ethanol acetyltransferase 1 (EAT1) (Eremothecium cymbalariae (strain CBS 270.75 / DBVPG 7215 / KCTC 17166 / NRRL Y-17582) (Yeast)).